A 157-amino-acid chain; its full sequence is Dihydrofolate reductase type 5 (157 aa).

Residues 2 to 156 form the DHFR domain; sequence KVSLMAAKAK…INYCYQIWQK (155 aa).

It belongs to the dihydrofolate reductase family. Homodimer.

It carries out the reaction (6S)-5,6,7,8-tetrahydrofolate + NADP(+) = 7,8-dihydrofolate + NADPH + H(+). Its pathway is cofactor biosynthesis; tetrahydrofolate biosynthesis; 5,6,7,8-tetrahydrofolate from 7,8-dihydrofolate: step 1/1. Functionally, key enzyme in folate metabolism. Catalyzes an essential reaction for de novo glycine and purine synthesis, and for DNA precursor synthesis. The sequence is that of Dihydrofolate reductase type 5 (dhfrV) from Escherichia coli.